Reading from the N-terminus, the 215-residue chain is NAD(P)H-quinone oxidoreductase subunit I (215 aa).

4Fe-4S ferredoxin-type domains lie at 55–84 and 95–124; these read GRIH…VDWV and RNYS…MTEE. [4Fe-4S] cluster contacts are provided by Cys64, Cys67, Cys70, Cys74, Cys104, Cys107, Cys110, and Cys114. The tract at residues 166-215 is disordered; sequence AGEMDPHGVPNDRPRAGQLPSQVLETLAPPAKVGAKNEGQSTGTTQEGEA. Over residues 169-180 the composition is skewed to basic and acidic residues; the sequence is MDPHGVPNDRPR. The segment covering 203-215 has biased composition (polar residues); it reads EGQSTGTTQEGEA.

The protein belongs to the complex I 23 kDa subunit family. NDH-1 is composed of at least 11 different subunits. The cofactor is [4Fe-4S] cluster.

Its subcellular location is the cellular thylakoid membrane. The catalysed reaction is a plastoquinone + NADH + (n+1) H(+)(in) = a plastoquinol + NAD(+) + n H(+)(out). The enzyme catalyses a plastoquinone + NADPH + (n+1) H(+)(in) = a plastoquinol + NADP(+) + n H(+)(out). Its function is as follows. NDH-1 shuttles electrons from an unknown electron donor, via FMN and iron-sulfur (Fe-S) centers, to quinones in the respiratory and/or the photosynthetic chain. The immediate electron acceptor for the enzyme in this species is believed to be plastoquinone. Couples the redox reaction to proton translocation, and thus conserves the redox energy in a proton gradient. The polypeptide is NAD(P)H-quinone oxidoreductase subunit I (Parasynechococcus marenigrum (strain WH8102)).